A 344-amino-acid chain; its full sequence is tRNA N6-adenosine threonylcarbamoyltransferase (344 aa).

Fe cation is bound by residues His-113 and His-117. Substrate-binding positions include 135-139 (LVSGG), Asp-169, Gly-182, Asp-186, and Asn-278. Asp-306 contributes to the Fe cation binding site. The interval 325 to 344 (ESPISVGTDPSLSVETPQVF) is disordered. Residues 326 to 344 (SPISVGTDPSLSVETPQVF) are compositionally biased toward polar residues.

This sequence belongs to the KAE1 / TsaD family. The cofactor is Fe(2+).

Its subcellular location is the cytoplasm. The catalysed reaction is L-threonylcarbamoyladenylate + adenosine(37) in tRNA = N(6)-L-threonylcarbamoyladenosine(37) in tRNA + AMP + H(+). Required for the formation of a threonylcarbamoyl group on adenosine at position 37 (t(6)A37) in tRNAs that read codons beginning with adenine. Is involved in the transfer of the threonylcarbamoyl moiety of threonylcarbamoyl-AMP (TC-AMP) to the N6 group of A37, together with TsaE and TsaB. TsaD likely plays a direct catalytic role in this reaction. This Corynebacterium glutamicum (strain R) protein is tRNA N6-adenosine threonylcarbamoyltransferase.